The sequence spans 107 residues: Ferredoxin (107 aa).

Positions 1–8 are excised as a propeptide; it reads MVSGVSRN. 3 residues coordinate [2Fe-2S] cluster: Cys45, Cys51, and Cys54.

[2Fe-2S] cluster serves as cofactor.

Its subcellular location is the hydrogenosome. Ferredoxins are iron-sulfur proteins that transfer electrons in a wide variety of metabolic reactions. The chain is Ferredoxin from Psalteriomonas lanterna (Amoeboflagellate).